Here is a 1234-residue protein sequence, read N- to C-terminus: Chromosome-associated kinesin KIF4B (1234 aa).

Residues 9–336 (PVRVALRCRP…LRYADRARKI (328 aa)) form the Kinesin motor domain. An ATP-binding site is contributed by 88–95 (GQTGSGKT). The stretch at 350 to 999 (ELNHLKQQVQ…IKQKLILLQV (650 aa)) forms a coiled coil. S394 is subject to Phosphoserine. 2 disordered regions span residues 494-513 (EEAQ…AFTT) and 712-737 (KRLK…HGKE). Residues 498-513 (VETSPETSRSSDAFTT) show a composition bias toward polar residues. The tract at residues 663-1234 (QWKQKKDKEV…GCSPIEEEAH (572 aa)) is interaction with PRC1. Residues 713–737 (RLKDALQKQREVTDKRKETQSHGKE) are compositionally biased toward basic and acidic residues. A Nuclear localization signal motif is present at residues 793–798 (PKLRKC). Phosphothreonine is present on T799. Phosphoserine occurs at positions 801, 951, 1001, 1013, 1017, and 1028. The interval 1000–1234 (ASRQKHLPND…GCSPIEEEAH (235 aa)) is globular. 4 disordered regions span residues 1007–1030 (PNDT…PSRV), 1052–1076 (VNEH…KPTK), 1122–1143 (RQQG…GSFK), and 1183–1234 (TAPA…EEAH). Over residues 1056 to 1071 (EDGDGDGDSDEGDDEE) the composition is skewed to acidic residues. The tract at residues 1086-1144 (QGCSCKGWCGNKQCGCRKQKSDCGVDCSCDPTKCRNRQQGKDSLGTVEQTQDSEGSFKL) is CRD; required for [4Fe-4S] cluster binding and localization to the spindle midzone and midbody during anaphase and telophase. S1128 carries the phosphoserine modification. T1183 is subject to Phosphothreonine. The residue at position 1188 (S1188) is a Phosphoserine. K1196 is covalently cross-linked (Glycyl lysine isopeptide (Lys-Gly) (interchain with G-Cter in SUMO2)). The residue at position 1227 (S1227) is a Phosphoserine.

Belongs to the TRAFAC class myosin-kinesin ATPase superfamily. Kinesin family. Chromokinesin subfamily. Requires [2Fe-2S] cluster as cofactor. The cofactor is [4Fe-4S] cluster. As to expression, specifically expressed in testis.

The protein localises to the nucleus matrix. Its subcellular location is the cytoplasm. It localises to the cytoskeleton. In terms of biological role, iron-sulfur (Fe-S) cluster binding motor protein that has a role in chromosome segregation during mitosis. Translocates PRC1 to the plus ends of interdigitating spindle microtubules during the metaphase to anaphase transition, an essential step for the formation of an organized central spindle midzone and midbody and for successful cytokinesis. May play a role in mitotic chromosomal positioning and bipolar spindle stabilization. The sequence is that of Chromosome-associated kinesin KIF4B (KIF4B) from Homo sapiens (Human).